A 33-amino-acid polypeptide reads, in one-letter code: Protein YtiC (33 aa).

Residues 10–29 form a helical membrane-spanning segment; the sequence is FDMLSIYIIYKLIVSNNTWL.

The protein resides in the cell inner membrane. The protein is Protein YtiC of Escherichia coli (strain K12).